The following is a 387-amino-acid chain: Xylose operon regulatory protein (387 aa).

The 99-residue stretch at 288–386 (IQAMHYIRHR…EMTPKEFRLN (99 aa)) folds into the HTH araC/xylS-type domain. DNA-binding regions (H-T-H motif) lie at residues 305 to 326 (GQVL…KNEM) and 353 to 376 (IKEI…KKEF).

Functionally, regulatory protein for the xylBAFGHR operon. The polypeptide is Xylose operon regulatory protein (xylR) (Haemophilus influenzae (strain ATCC 51907 / DSM 11121 / KW20 / Rd)).